Reading from the N-terminus, the 203-residue chain is Ribosomal RNA large subunit methyltransferase E (203 aa).

S-adenosyl-L-methionine-binding residues include G60, W62, D79, D95, and D119. The active-site Proton acceptor is the K159.

Belongs to the class I-like SAM-binding methyltransferase superfamily. RNA methyltransferase RlmE family.

Its subcellular location is the cytoplasm. The enzyme catalyses uridine(2552) in 23S rRNA + S-adenosyl-L-methionine = 2'-O-methyluridine(2552) in 23S rRNA + S-adenosyl-L-homocysteine + H(+). In terms of biological role, specifically methylates the uridine in position 2552 of 23S rRNA at the 2'-O position of the ribose in the fully assembled 50S ribosomal subunit. This Pelagibacter ubique (strain HTCC1062) protein is Ribosomal RNA large subunit methyltransferase E.